Here is a 177-residue protein sequence, read N- to C-terminus: Disulfide bond formation protein B (177 aa).

Topologically, residues 1–14 (MMVWNWIDRTPRRV) are cytoplasmic. A helical membrane pass occupies residues 15–31 (LALISLACVALLACGLY). Topologically, residues 32–49 (LQHVVGLVPCPMCIVQRY) are periplasmic. Cysteines 41 and 44 form a disulfide. Residues 50 to 64 (ALIGLALLTGLASAR) form a helical membrane-spanning segment. Residues 65 to 70 (SAKGWW) are Cytoplasmic-facing. Residues 71–89 (LTLSALAALTAGFGATVAA) form a helical membrane-spanning segment. Residues 90–145 (RQSWLQWYPPQSVSCGRDFYGMIESFPLSRAIPMILRGSGDCAAVDWSLLGGSIAN) are Periplasmic-facing. Cysteine 104 and cysteine 131 are joined by a disulfide. The helical transmembrane segment at 146–164 (WSFLCFALLGLLLLALLAR) threads the bilayer. Residues 165 to 177 (GVRGARQRAPAPV) are Cytoplasmic-facing.

This sequence belongs to the DsbB family.

The protein localises to the cell inner membrane. In terms of biological role, required for disulfide bond formation in some periplasmic proteins. Acts by oxidizing the DsbA protein. The protein is Disulfide bond formation protein B of Verminephrobacter eiseniae (strain EF01-2).